Reading from the N-terminus, the 157-residue chain is 2-C-methyl-D-erythritol 2,4-cyclodiphosphate synthase (157 aa).

Asp-8 and His-10 together coordinate a divalent metal cation. 4-CDP-2-C-methyl-D-erythritol 2-phosphate is bound by residues 8–10 (DVH) and 34–35 (HS). Residue His-42 participates in a divalent metal cation binding. Residues 56–58 (DIG), 132–135 (TTNE), and Arg-142 contribute to the 4-CDP-2-C-methyl-D-erythritol 2-phosphate site.

This sequence belongs to the IspF family. Homotrimer. The cofactor is a divalent metal cation.

The catalysed reaction is 4-CDP-2-C-methyl-D-erythritol 2-phosphate = 2-C-methyl-D-erythritol 2,4-cyclic diphosphate + CMP. It participates in isoprenoid biosynthesis; isopentenyl diphosphate biosynthesis via DXP pathway; isopentenyl diphosphate from 1-deoxy-D-xylulose 5-phosphate: step 4/6. Functionally, involved in the biosynthesis of isopentenyl diphosphate (IPP) and dimethylallyl diphosphate (DMAPP), two major building blocks of isoprenoid compounds. Catalyzes the conversion of 4-diphosphocytidyl-2-C-methyl-D-erythritol 2-phosphate (CDP-ME2P) to 2-C-methyl-D-erythritol 2,4-cyclodiphosphate (ME-CPP) with a corresponding release of cytidine 5-monophosphate (CMP). This is 2-C-methyl-D-erythritol 2,4-cyclodiphosphate synthase from Chlorobaculum tepidum (strain ATCC 49652 / DSM 12025 / NBRC 103806 / TLS) (Chlorobium tepidum).